The sequence spans 284 residues: RNase adapter protein RapZ (284 aa).

8–15 (GRSGSGKS) contributes to the ATP binding site. Residue 56-59 (DVRN) participates in GTP binding. Residues 266-284 (RSRGKNVQSRHRTLEKRKT) are RNA-binding.

Belongs to the RapZ-like family. RapZ subfamily. As to quaternary structure, homotrimer.

Functionally, modulates the synthesis of GlmS, by affecting the processing and stability of the regulatory small RNA GlmZ. When glucosamine-6-phosphate (GlcN6P) concentrations are high in the cell, RapZ binds GlmZ and targets it to cleavage by RNase E. Consequently, GlmZ is inactivated and unable to activate GlmS synthesis. Under low GlcN6P concentrations, RapZ is sequestered and inactivated by an other regulatory small RNA, GlmY, preventing GlmZ degradation and leading to synthesis of GlmS. This is RNase adapter protein RapZ from Citrobacter koseri (strain ATCC BAA-895 / CDC 4225-83 / SGSC4696).